Consider the following 103-residue polypeptide: UPF0145 protein BT9727_3206 (103 aa).

The protein belongs to the UPF0145 family.

In Bacillus thuringiensis subsp. konkukian (strain 97-27), this protein is UPF0145 protein BT9727_3206.